A 392-amino-acid chain; its full sequence is MVSELVSMYVPPIVEAAKAVTPWQAAAGVTAAIFIGSYLWHSASLRKQRRTGTADGGLFSLTAGGIKKQDVTKLVDSFSQAYKTEDDGQLTCHHITREQSVEMVNTFYDLITDLYEWAWDTSFHFSCRPRWANFAQAQVLHEWRIANLANIQPGMKVLDVGTGVGNPGRTIASLSGAQVTGVTINAYQVKRALHHTRKAKLEDFYKPVQADFTDTPFEDDTFDAAFAIEATCHAPKLEQVYKEVYRVLKPGAYFALYDGVTKPNFDPKNERHVQLMNATVIGNGCPDMRTWKECEEIGKEVGFKLHMSYDAGEASRVLHPWWEKLDNFINTGFAWYGPASIKLLSKIGFLPRDFTKFIDIAAASVFSVKEAGELGIFTPMYVFVWQKPEKTA.

A helical transmembrane segment spans residues 20 to 42 (VTPWQAAAGVTAAIFIGSYLWHS).

This sequence belongs to the class I-like SAM-binding methyltransferase superfamily. Erg6/SMT family.

It localises to the microsome membrane. In terms of biological role, unable to convert squalene, botryococcene, cycloartenol, zymosterol or lanosterol to mono-, di-, tri- or tetramethylated derivatives. This Botryococcus braunii (Green alga) protein is Sterol methyltransferase-like 3 (SMT-3).